The primary structure comprises 206 residues: Small ribosomal subunit protein uS4 (206 aa).

The S4 RNA-binding domain occupies 96–157 (GRLDNVVYRM…KAKKQSRVRA (62 aa)).

Belongs to the universal ribosomal protein uS4 family. In terms of assembly, part of the 30S ribosomal subunit. Contacts protein S5. The interaction surface between S4 and S5 is involved in control of translational fidelity.

Its function is as follows. One of the primary rRNA binding proteins, it binds directly to 16S rRNA where it nucleates assembly of the body of the 30S subunit. With S5 and S12 plays an important role in translational accuracy. The sequence is that of Small ribosomal subunit protein uS4 from Sodalis glossinidius (strain morsitans).